A 128-amino-acid chain; its full sequence is Aspartate 1-decarboxylase (128 aa).

The active-site Schiff-base intermediate with substrate; via pyruvic acid is Ser-25. Residue Ser-25 is modified to Pyruvic acid (Ser). Thr-57 is a substrate binding site. Tyr-58 serves as the catalytic Proton donor. Substrate is bound at residue 73 to 75; it reads GAA.

This sequence belongs to the PanD family. In terms of assembly, heterooctamer of four alpha and four beta subunits. It depends on pyruvate as a cofactor. Is synthesized initially as an inactive proenzyme, which is activated by self-cleavage at a specific serine bond to produce a beta-subunit with a hydroxyl group at its C-terminus and an alpha-subunit with a pyruvoyl group at its N-terminus.

Its subcellular location is the cytoplasm. The enzyme catalyses L-aspartate + H(+) = beta-alanine + CO2. Its pathway is cofactor biosynthesis; (R)-pantothenate biosynthesis; beta-alanine from L-aspartate: step 1/1. Its function is as follows. Catalyzes the pyruvoyl-dependent decarboxylation of aspartate to produce beta-alanine. This is Aspartate 1-decarboxylase from Moorella thermoacetica (strain ATCC 39073 / JCM 9320).